Consider the following 138-residue polypeptide: Acidic phospholipase A2 jerdoxin (138 aa).

A signal peptide spans 1–16 (MRTLWIMAVLLVGVEG). Disulfide bonds link cysteine 42/cysteine 131, cysteine 44/cysteine 60, cysteine 59/cysteine 111, cysteine 65/cysteine 138, cysteine 66/cysteine 104, cysteine 73/cysteine 97, and cysteine 91/cysteine 102. Positions 43, 45, and 47 each coordinate Ca(2+). Residue histidine 63 is part of the active site. Aspartate 64 contacts Ca(2+). Aspartate 105 is a catalytic residue.

It belongs to the phospholipase A2 family. Group II subfamily. D49 sub-subfamily. As to quaternary structure, monomer. Requires Ca(2+) as cofactor. In terms of tissue distribution, expressed by the venom gland.

It is found in the secreted. The catalysed reaction is a 1,2-diacyl-sn-glycero-3-phosphocholine + H2O = a 1-acyl-sn-glycero-3-phosphocholine + a fatty acid + H(+). Functionally, snake venom phospholipase A2 (PLA2) that displays edema-inducing activities, exhibits indirect hemolytic activity, and inhibits ADP-induced platelet aggregation. PLA2 catalyzes the calcium-dependent hydrolysis of the 2-acyl groups in 3-sn-phosphoglycerides. This Protobothrops jerdonii (Jerdon's pitviper) protein is Acidic phospholipase A2 jerdoxin.